We begin with the raw amino-acid sequence, 445 residues long: Phosphoglucosamine mutase (445 aa).

S102 serves as the catalytic Phosphoserine intermediate. 4 residues coordinate Mg(2+): S102, D240, D242, and D244. Residue S102 is modified to Phosphoserine.

It belongs to the phosphohexose mutase family. The cofactor is Mg(2+). Activated by phosphorylation.

The enzyme catalyses alpha-D-glucosamine 1-phosphate = D-glucosamine 6-phosphate. In terms of biological role, catalyzes the conversion of glucosamine-6-phosphate to glucosamine-1-phosphate. The protein is Phosphoglucosamine mutase of Mycobacterium marinum (strain ATCC BAA-535 / M).